The sequence spans 210 residues: LexA repressor (210 aa).

The H-T-H motif DNA-binding region spans 29-49 (VREIGEAVDLSSTSTVHGHIS). Active-site for autocatalytic cleavage activity residues include Ser-130 and Lys-168.

Belongs to the peptidase S24 family. As to quaternary structure, homodimer.

The enzyme catalyses Hydrolysis of Ala-|-Gly bond in repressor LexA.. Its function is as follows. Represses a number of genes involved in the response to DNA damage (SOS response), including recA and lexA. In the presence of single-stranded DNA, RecA interacts with LexA causing an autocatalytic cleavage which disrupts the DNA-binding part of LexA, leading to derepression of the SOS regulon and eventually DNA repair. The polypeptide is LexA repressor (Lactiplantibacillus plantarum (strain ATCC BAA-793 / NCIMB 8826 / WCFS1) (Lactobacillus plantarum)).